The primary structure comprises 720 residues: NAD(+) hydrolase ApTIR (720 aa).

One can recognise a TIR domain in the interval 1–131 (MRYDAFISYS…AVPPALRGVF (131 aa)). Residues 10–11 (SH) and Ala48 each bind NAD(+). The active site involves Glu84. The helical transmembrane segment at 192 to 211 (GALAVVCALLLLVAGTAVAW) threads the bilayer. 2 disordered regions span residues 231–275 (ATAA…AVAE) and 292–359 (EGIA…EEAV). Basic and acidic residues-rich tracts occupy residues 256-268 (EQQR…EEAR) and 307-359 (AEAR…EEAV). Residues 313 to 362 (RGVADAEKAKANRAAAEAERQRKIAADEQRKAHEAAAEAERQREEAVKQQ) adopt a coiled-coil conformation. 7 WD repeats span residues 420 to 459 (GHTA…APRR), 465 to 504 (SSTA…APRR), 510 to 549 (GHTD…APRR), 555 to 594 (DHTA…APRR), 600 to 639 (GHTA…APRR), 645 to 684 (GHTA…APRR), and 690 to 720 (GHTD…CCGM).

Its subcellular location is the cell membrane. It catalyses the reaction NAD(+) + H2O = ADP-D-ribose + nicotinamide + H(+). Functionally, NAD(+) hydrolase (NADase) that catalyzes cleavage of NAD(+) into ADP-D-ribose (ADPR) and nicotinamide. The sequence is that of NAD(+) hydrolase ApTIR from Actinoplanes sp. (strain ATCC 31044 / CBS 674.73 / SE50/110).